Reading from the N-terminus, the 609-residue chain is Frizzled and smoothened-like protein E (609 aa).

The N-terminal stretch at 1 to 20 is a signal peptide; that stretch reads MEMIRIFLIYLILKIIIING. Topologically, residues 21–259 are extracellular; sequence ENNEYSKGYG…QWKRVYDMAK (239 aa). In terms of domain architecture, FZ spans 35–192; sequence FPGSKCLNYV…GLYKVPCIDP (158 aa). Intrachain disulfides connect C40/C118, C53/C111, C100/C149, and C138/C189. Residues N75, N130, N172, N198, N217, and N245 are each glycosylated (N-linked (GlcNAc...) asparagine). Residues 260–280 traverse the membrane as a helical segment; sequence TLSSISFICACYNILTFGILN. Topologically, residues 281 to 288 are cytoplasmic; it reads RKRKSKYN. Residues 289-309 form a helical membrane-spanning segment; sequence ICITLMSTSIALVYLTDIIKF. Residues 310 to 337 lie on the Extracellular side of the membrane; the sequence is GYGIEEFLCPEPGRSAVQNDAACGITGA. Residues 338–358 form a helical membrane-spanning segment; that stretch reads MFHFGITYCCCWAMTMSIVLF. The Cytoplasmic segment spans residues 359–365; sequence CSVKRIK. Residues 366 to 386 traverse the membrane as a helical segment; that stretch reads LFYFRHFMIGNTIFTIITTVI. Over 387 to 408 the chain is Extracellular; sequence LLSAKKMVAGTGYIECWVRERW. Residues 409–429 traverse the membrane as a helical segment; the sequence is FVITLFWLPCGIGLSIGIFCI. Residues 430–457 lie on the Cytoplasmic side of the membrane; that stretch reads GGVIHEIYNISKKVNIRESEFILRQIKP. The helical transmembrane segment at 458–478 threads the bilayer; sequence FSLVFSVAGSFLYLFIFFFDV. Residues 479–511 are Extracellular-facing; the sequence is ERKIDSYKAAVADYVLCLLSGGSEETCFTTGPN. Residues 512 to 532 form a helical membrane-spanning segment; sequence YASFFIFYFFIRVFGVLFFSI. At 533-609 the chain is on the cytoplasmic side; sequence YGTSRVARDI…DSKSIELEKK (77 aa). Positions 559 to 570 are enriched in polar residues; that stretch reads ESGISRNNSRTD. The segment at 559–609 is disordered; sequence ESGISRNNSRTDISFGKNNNSKNSNNSKNSNNSKNSNNSDNDSKSIELEKK. Positions 575–598 are enriched in low complexity; that stretch reads KNNNSKNSNNSKNSNNSKNSNNSD. Over residues 599–609 the composition is skewed to basic and acidic residues; the sequence is NDSKSIELEKK.

It belongs to the G-protein coupled receptor Fz/Smo family.

The protein resides in the membrane. This chain is Frizzled and smoothened-like protein E (fslE), found in Dictyostelium discoideum (Social amoeba).